Here is a 449-residue protein sequence, read N- to C-terminus: Cyclin-B1-5 (449 aa).

2 disordered regions span residues 1–37 (MATR…AGRP) and 98–147 (PARK…GGSA). 2 stretches are compositionally biased toward low complexity: residues 8–37 (AAAA…AGRP) and 136–147 (SEGAGSSSGGSA).

It belongs to the cyclin family. Cyclin AB subfamily.

This Oryza sativa subsp. japonica (Rice) protein is Cyclin-B1-5 (CYCB1-5).